A 396-amino-acid chain; its full sequence is 8-amino-7-oxononanoate synthase (396 aa).

Arg19 contacts substrate. 106–107 contacts pyridoxal 5'-phosphate; that stretch reads GY. His131 is a substrate binding site. Pyridoxal 5'-phosphate-binding residues include Ser176, His204, and Thr233. Residue Lys236 is modified to N6-(pyridoxal phosphate)lysine. A substrate-binding site is contributed by Thr350.

The protein belongs to the class-II pyridoxal-phosphate-dependent aminotransferase family. BioF subfamily. As to quaternary structure, homodimer. Pyridoxal 5'-phosphate is required as a cofactor.

The enzyme catalyses 6-carboxyhexanoyl-[ACP] + L-alanine + H(+) = (8S)-8-amino-7-oxononanoate + holo-[ACP] + CO2. It participates in cofactor biosynthesis; biotin biosynthesis. Its function is as follows. Catalyzes the decarboxylative condensation of pimeloyl-[acyl-carrier protein] and L-alanine to produce 8-amino-7-oxononanoate (AON), [acyl-carrier protein], and carbon dioxide. The polypeptide is 8-amino-7-oxononanoate synthase (Pseudomonas syringae pv. tomato (strain ATCC BAA-871 / DC3000)).